A 1215-amino-acid chain; its full sequence is DNA-directed RNA polymerase subunit beta' (1215 aa).

Cysteine 60, cysteine 62, cysteine 75, and cysteine 78 together coordinate Zn(2+). The Mg(2+) site is built by aspartate 450, aspartate 452, and aspartate 454. Zn(2+) is bound by residues cysteine 818, cysteine 892, cysteine 899, and cysteine 902.

It belongs to the RNA polymerase beta' chain family. In terms of assembly, the RNAP catalytic core consists of 2 alpha, 1 beta, 1 beta' and 1 omega subunit. When a sigma factor is associated with the core the holoenzyme is formed, which can initiate transcription. Requires Mg(2+) as cofactor. It depends on Zn(2+) as a cofactor.

It catalyses the reaction RNA(n) + a ribonucleoside 5'-triphosphate = RNA(n+1) + diphosphate. Functionally, DNA-dependent RNA polymerase catalyzes the transcription of DNA into RNA using the four ribonucleoside triphosphates as substrates. This chain is DNA-directed RNA polymerase subunit beta', found in Streptococcus suis (strain 98HAH33).